Reading from the N-terminus, the 162-residue chain is UPF0305 protein MmarC5_0909 (162 aa).

It belongs to the UPF0305 family.

The sequence is that of UPF0305 protein MmarC5_0909 from Methanococcus maripaludis (strain C5 / ATCC BAA-1333).